A 117-amino-acid chain; its full sequence is Multidrug resistance protein EbrB (117 aa).

Transmembrane regions (helical) follow at residues 3–23, 31–51, 59–79, and 81–101; these read GLLY…MLKL, WPIG…SFSL, AYAT…FLLF, and ETIS…VVVL.

Belongs to the drug/metabolite transporter (DMT) superfamily. Small multidrug resistance (SMR) (TC 2.A.7.1) family. EbrA/EbrB subfamily. As to quaternary structure, the efflux pump is composed of EbrA and EbrB.

It localises to the cell membrane. Its function is as follows. Part of a multidrug efflux pump. Confers resistance to cationic lipophilic dyes such as ethidium bromide, acriflavine, pyronine Y and safranin O. The efflux is probably coupled to an influx of protons. The protein is Multidrug resistance protein EbrB (ebrB) of Bacillus atrophaeus.